The chain runs to 850 residues: Coiled-coil and C2 domain-containing protein 1B (850 aa).

The span at 1–10 (MPGPRPRKGP) shows a compositional bias: basic residues. Disordered regions lie at residues 1 to 21 (MPGPRPRKGPKTSGQGAETAK), 54 to 73 (LTGETGSTSRKPAPKGRAPL), and 114 to 145 (GVDEETGLVDDSEETSPDLSEEKTRDNTEQPV). Residues 114-129 (GVDEETGLVDDSEETS) show a composition bias toward acidic residues. Residues 167 to 213 (LQALLEERIQNYREAAASAKEAGEAAKARRCERGLKTLESQLATVRK) are a coiled coil. 2 disordered regions span residues 215–277 (GKIC…SDPD) and 436–525 (FAEL…SPSV). A compositionally biased stretch (basic and acidic residues) spans 234 to 244 (AHQERPSKDSE). Residues 440 to 450 (PVPPGFPPIPG) show a composition bias toward pro residues. Composition is skewed to low complexity over residues 489–502 (PAQAPLAKKPAQPL) and 511–524 (EPKASSSKESLSPS). Phosphoserine is present on serine 585. Threonine 588 carries the phosphothreonine modification. Residues 668 to 807 (DPPSHHFELK…EKECEIREIM (140 aa)) form the C2 domain.

As to quaternary structure, interacts with CHMP4B. As to expression, expressed in epididymal sperm but not in testicular sperm (at protein level).

The protein resides in the nucleus. Transcription factor that binds specifically to the DRE (dual repressor element) and represses HTR1A gene transcription in neuronal cells. In Rattus norvegicus (Rat), this protein is Coiled-coil and C2 domain-containing protein 1B (Cc2d1b).